We begin with the raw amino-acid sequence, 1240 residues long: ABC transporter B family member 17 (1240 aa).

An ABC transmembrane type-1 1 domain is found at 35–324 (MALGLIGAVG…SLSNLKYFSE (290 aa)). A helical transmembrane segment spans residues 36-56 (ALGLIGAVGDGFITPVVVFIF). Asn70 carries N-linked (GlcNAc...) asparagine glycosylation. The next 5 helical transmembrane spans lie at 81-101 (VVAL…EGYC), 158-180 (LPNF…ILMW), 184-206 (IVGF…ALVS), 264-284 (GITI…TWYG), and 296-316 (GTVF…GQSL). Positions 359-595 (VEFNHVKFTY…IDGQYTSLVS (237 aa)) constitute an ABC transporter 1 domain. Position 394-401 (394-401 (GGSGSGKS)) interacts with ATP. Asn542, Asn609, and Asn642 each carry an N-linked (GlcNAc...) asparagine glycan. One can recognise an ABC transmembrane type-1 2 domain in the interval 672–960 (ALYGCLSAAL…AGTMTTDLAR (289 aa)). Helical transmembrane passes span 681–701 (LVGV…SVFF) and 714–734 (IYVL…ISQH). N-linked (GlcNAc...) asparagine glycosylation is present at Asn769. Helical transmembrane passes span 793–815 (MSLL…VIAW), 817–839 (LAIV…RVLL), 896–919 (WLAG…NFWY), and 923–943 (LIAD…IFVT). One can recognise an ABC transporter 2 domain in the interval 995–1233 (ITFLNVDFAY…GPTGTYFSLA (239 aa)). Residue Asn1015 is glycosylated (N-linked (GlcNAc...) asparagine). 1030 to 1037 (GTSGSGKS) lines the ATP pocket.

Belongs to the ABC transporter superfamily. ABCB family. Multidrug resistance exporter (TC 3.A.1.201) subfamily.

It localises to the membrane. This is ABC transporter B family member 17 (ABCB17) from Arabidopsis thaliana (Mouse-ear cress).